The following is a 425-amino-acid chain: Monoacylglycerol lipase ABHD2 (425 aa).

The Cytoplasmic portion of the chain corresponds to 1–9 (MNAMMETSE). The helical; Signal-anchor for type II membrane protein transmembrane segment at 10–30 (LPAVFDGVKLAAVAAVLYVIV) threads the bilayer. Over 31–425 (RCLNLKSPTA…DTELVEADLE (395 aa)) the chain is Extracellular. The region spanning 128 to 382 (MVICPGIANH…HGGHLGFFEG (255 aa)) is the AB hydrolase-1 domain. Residue asparagine 136 is glycosylated (N-linked (GlcNAc...) asparagine). The active-site Nucleophile is serine 207. Active-site charge relay system residues include aspartate 345 and histidine 376. N-linked (GlcNAc...) asparagine glycosylation occurs at asparagine 410.

The protein belongs to the AB hydrolase superfamily. AB hydrolase 4 family.

It is found in the cell membrane. The enzyme catalyses Hydrolyzes glycerol monoesters of long-chain fatty acids.. The catalysed reaction is an acetyl ester + H2O = an aliphatic alcohol + acetate + H(+). It catalyses the reaction a triacylglycerol + H2O = a diacylglycerol + a fatty acid + H(+). It carries out the reaction 2-(5Z,8Z,11Z,14Z-eicosatetraenoyl)-glycerol + H2O = glycerol + (5Z,8Z,11Z,14Z)-eicosatetraenoate + H(+). The enzyme catalyses a butanoate ester + H2O = an aliphatic alcohol + butanoate + H(+). The catalysed reaction is hexadecanoate ester + H2O = an aliphatic alcohol + hexadecanoate + H(+). With respect to regulation, acylglycerol lipase activity is activated upon binding to progesterone. In terms of biological role, progesterone-dependent acylglycerol lipase that catalyzes hydrolysis of endocannabinoid arachidonoylglycerol (AG) from cell membrane. Acts as a progesterone receptor: progesterone-binding activates the acylglycerol lipase activity, mediating degradation of 1-arachidonoylglycerol (1AG) and 2-arachidonoylglycerol (2AG) to glycerol and arachidonic acid (AA). Also displays an ester hydrolase activity against acetyl ester, butanoate ester and hexadecanoate ester. Plays a key role in sperm capacitation in response to progesterone by mediating degradation of 2AG, an inhibitor of the sperm calcium channel CatSper, leading to calcium influx via CatSper and sperm activation. May also play a role in smooth muscle cells migration. The protein is Monoacylglycerol lipase ABHD2 (ABHD2) of Bos taurus (Bovine).